Consider the following 331-residue polypeptide: Vacuolar protein sorting-associated protein 26B (331 aa).

The tract at residues 310–331 (AAQRYEGSNPEPTSAQAKEETD) is disordered.

Belongs to the VPS26 family. As to quaternary structure, component of the heterotrimeric retromer cargo-selective complex (CSC) which is believed to associate with variable sorting nexins to form functionally distinct retromer complex variants.

The protein localises to the cytoplasm. The protein resides in the membrane. It localises to the endosome. Its function is as follows. Acts as a component of the retromer cargo-selective complex (CSC). The CSC is believed to be the core functional component of retromer or respective retromer complex variants acting to prevent missorting of selected transmembrane cargo proteins into the lysosomal degradation pathway. Retromer mediates retrograde transport of cargo proteins from endosomes to the trans-Golgi network (TGN). This Danio rerio (Zebrafish) protein is Vacuolar protein sorting-associated protein 26B (vps26b).